Reading from the N-terminus, the 256-residue chain is Protein LIKE COV 1 (256 aa).

A compositionally biased stretch (basic and acidic residues) spans 1-10; it reads MANRERDREL. The disordered stretch occupies residues 1–39; the sequence is MANRERDRELLIPVADFGDKDDGSSSKPSSSSSASSSHQ. The Cytoplasmic segment spans residues 1 to 60; the sequence is MANRERDRELLIPVADFGDKDDGSSSKPSSSSSASSSHQSGHETLSLFIRGWASKKFMTG. Residues 25–39 are compositionally biased toward low complexity; it reads SSKPSSSSSASSSHQ. Residues 61-81 form a helical membrane-spanning segment; sequence CVILLPIAVTFYTTWWFIHFV. Over 82-93 the chain is Extracellular; sequence DGFFSPIYALLG. A helical transmembrane segment spans residues 94-114; it reads INIFGFGFLTSIAFIFLVGVF. Residues 115–256 lie on the Cytoplasmic side of the membrane; it reads MSSWLGASVL…KPLASIGNES (142 aa).

The protein belongs to the plant COV1 protein family. Expressed at low levels in flowers, stems, roots and leaves.

The protein resides in the membrane. The sequence is that of Protein LIKE COV 1 from Arabidopsis thaliana (Mouse-ear cress).